The chain runs to 507 residues: Bifunctional purine biosynthesis protein PurH (507 aa).

Positions 1–144 (MKRALLSVSD…KNSDSVWAVV (144 aa)) constitute an MGS-like domain.

It belongs to the PurH family.

The catalysed reaction is (6R)-10-formyltetrahydrofolate + 5-amino-1-(5-phospho-beta-D-ribosyl)imidazole-4-carboxamide = 5-formamido-1-(5-phospho-D-ribosyl)imidazole-4-carboxamide + (6S)-5,6,7,8-tetrahydrofolate. It catalyses the reaction IMP + H2O = 5-formamido-1-(5-phospho-D-ribosyl)imidazole-4-carboxamide. Its pathway is purine metabolism; IMP biosynthesis via de novo pathway; 5-formamido-1-(5-phospho-D-ribosyl)imidazole-4-carboxamide from 5-amino-1-(5-phospho-D-ribosyl)imidazole-4-carboxamide (10-formyl THF route): step 1/1. The protein operates within purine metabolism; IMP biosynthesis via de novo pathway; IMP from 5-formamido-1-(5-phospho-D-ribosyl)imidazole-4-carboxamide: step 1/1. This is Bifunctional purine biosynthesis protein PurH from Lacticaseibacillus casei (strain BL23) (Lactobacillus casei).